Here is a 347-residue protein sequence, read N- to C-terminus: Queuosine 5'-phosphate N-glycosylase/hydrolase (347 aa).

Queuine contacts are provided by His-53, Phe-237, Asp-239, Asp-321, and Asp-326. Catalysis depends on Asp-239, which acts as the Nucleophile or transition state stabilizer.

This sequence belongs to the QNG1 protein family.

The catalysed reaction is queuosine 5'-phosphate + H2O = queuine + D-ribose 5-phosphate. Catalyzes the hydrolysis of queuosine 5'-phosphate, releasing the nucleobase queuine (q). Is required for salvage of queuine from exogenous queuosine (Q) that is imported and then converted to queuosine 5'-phosphate intracellularly. The chain is Queuosine 5'-phosphate N-glycosylase/hydrolase from Nematostella vectensis (Starlet sea anemone).